Here is a 407-residue protein sequence, read N- to C-terminus: Imidazolonepropionase (407 aa).

Fe(3+) contacts are provided by histidine 75 and histidine 77. Residues histidine 75 and histidine 77 each contribute to the Zn(2+) site. Residues arginine 84, tyrosine 142, and histidine 169 each coordinate 4-imidazolone-5-propanoate. Tyrosine 142 is a binding site for N-formimidoyl-L-glutamate. A Fe(3+)-binding site is contributed by histidine 232. A Zn(2+)-binding site is contributed by histidine 232. Glutamine 235 serves as a coordination point for 4-imidazolone-5-propanoate. Aspartate 306 contributes to the Fe(3+) binding site. A Zn(2+)-binding site is contributed by aspartate 306. N-formimidoyl-L-glutamate-binding residues include asparagine 308 and glycine 310. Threonine 311 is a binding site for 4-imidazolone-5-propanoate.

It belongs to the metallo-dependent hydrolases superfamily. HutI family. Requires Zn(2+) as cofactor. It depends on Fe(3+) as a cofactor.

It is found in the cytoplasm. It carries out the reaction 4-imidazolone-5-propanoate + H2O = N-formimidoyl-L-glutamate. Its pathway is amino-acid degradation; L-histidine degradation into L-glutamate; N-formimidoyl-L-glutamate from L-histidine: step 3/3. Catalyzes the hydrolytic cleavage of the carbon-nitrogen bond in imidazolone-5-propanoate to yield N-formimidoyl-L-glutamate. It is the third step in the universal histidine degradation pathway. This Rhodococcus jostii (strain RHA1) protein is Imidazolonepropionase.